We begin with the raw amino-acid sequence, 493 residues long: Cytochrome P450 2A9 (493 aa).

Residue Cys438 participates in heme binding.

This sequence belongs to the cytochrome P450 family. Heme is required as a cofactor. Liver.

It localises to the endoplasmic reticulum membrane. Its subcellular location is the microsome membrane. It catalyses the reaction an organic molecule + reduced [NADPH--hemoprotein reductase] + O2 = an alcohol + oxidized [NADPH--hemoprotein reductase] + H2O + H(+). In terms of biological role, cytochromes P450 are a group of heme-thiolate monooxygenases. In liver microsomes, this enzyme is involved in an NADPH-dependent electron transport pathway. It oxidizes a variety of structurally unrelated compounds, including steroids, fatty acids, and xenobiotics. The protein is Cytochrome P450 2A9 (CYP2A9) of Mesocricetus auratus (Golden hamster).